The primary structure comprises 354 residues: Inactive ADP-ribosyltransferase ARH2 (354 aa).

A Phosphoserine modification is found at Ser-27.

The protein belongs to the ADP-ribosylglycohydrolase family.

Its subcellular location is the cytoplasm. It is found in the myofibril. The protein resides in the sarcomere. Required for myofibril assembly and outgrowth of the cardiac chambers in the developing heart. Appears to be catalytically inactive, showing no activity against O-acetyl-ADP-ribose. This chain is Inactive ADP-ribosyltransferase ARH2 (ADPRHL1), found in Pongo abelii (Sumatran orangutan).